A 700-amino-acid polypeptide reads, in one-letter code: Polyribonucleotide nucleotidyltransferase (700 aa).

The Mg(2+) site is built by D491 and D497. A KH domain is found at 558 to 617 (PNYAVIEINPDKIRDVIGKGGATIRQLTEETGAVIDIDDAGTIRIFGENKAATKAAIAKI). An S1 motif domain is found at 627-695 (GKTYEGTVAR…NRGRIKLTMK (69 aa)).

It belongs to the polyribonucleotide nucleotidyltransferase family. As to quaternary structure, component of the RNA degradosome, which is a multiprotein complex involved in RNA processing and mRNA degradation. Requires Mg(2+) as cofactor.

Its subcellular location is the cytoplasm. The catalysed reaction is RNA(n+1) + phosphate = RNA(n) + a ribonucleoside 5'-diphosphate. Its function is as follows. Involved in mRNA degradation. Catalyzes the phosphorolysis of single-stranded polyribonucleotides processively in the 3'- to 5'-direction. This is Polyribonucleotide nucleotidyltransferase from Psychrobacter arcticus (strain DSM 17307 / VKM B-2377 / 273-4).